The chain runs to 150 residues: Large ribosomal subunit protein uL15 (150 aa).

The protein belongs to the universal ribosomal protein uL15 family. As to quaternary structure, part of the 50S ribosomal subunit.

Binds to the 23S rRNA. In Anaplasma marginale (strain Florida), this protein is Large ribosomal subunit protein uL15.